Reading from the N-terminus, the 175-residue chain is Two-on-two hemoglobin-3 (175 aa).

The heme site is built by Y85 and H98. The interval 153 to 175 is disordered; it reads QNEKPKHKPQCACKHAANKPAEE.

It belongs to the truncated hemoglobin family. Group II subfamily. Homodimer when ferric. Interacts with RGLG3 and RGLG4. Heme serves as cofactor. As to expression, expressed ubiquitously, with higher levels in root tissue than in shoot tissue.

Its function is as follows. Hemoglobin-like protein that exhibits an unusual concentration-independent binding of O(2) and CO. May promote shoot organogenesis from root explants in vitro. Inhibits RGLG3 and RGLG4 ubiquitination activity. The sequence is that of Two-on-two hemoglobin-3 (GLB3) from Arabidopsis thaliana (Mouse-ear cress).